The chain runs to 479 residues: Baeyer-Villiger monooxygenase AacuH (479 aa).

The interval 14–34 is disordered; that stretch reads DSLGHPDGASRPPVSAESLSR.

This sequence belongs to the AflY oxidoreductase family.

It participates in secondary metabolite biosynthesis. Its function is as follows. Baeyer-Villiger monooxygenase; part of the gene cluster that mediates the biosynthesis of the tetrahydroxanthone dimer secalonic acid D. The pathway begins with the synthesis of atrochrysone thioester by the polyketide synthase AacuL. The atrochrysone carboxyl ACP thioesterase AacuM then breaks the thioester bond and releases the atrochrysone carboxylic acid from AacuL. Atrochrysone carboxylic acid is decarboxylated by the decarboxylase AacuI, and oxidized by the anthrone oxygenase AacuG to yield emodin. Emodin is then reduced to emodin hydroquinone by a yet unidentified oxidoreductase. A-ring reduction by the short chain dehydrogenase AacuN, dehydration by the scytalone dehydratase-like protein AacuK and probable spontaneous re-oxidation, results in overall deoxygenation to chrysophanol. Baeyer-Villiger oxidation by the Baeyer-Villiger monooxygenase (BVMO) AacuH then yields monodictyphenone. Monodictyphenone is transformed into compounds with the tetrahydroxanthone skeleton via methylesterification by the methyltransferase AacuQ, followed by the action of the flavin-dependent monooxygenase AacuC, the isomerase AacuP, and the short chain dehydrogenase/reductase AacuF or AacuD. AacuF and AacuD should accept the same compound as a substrate but perform the ketoreduction with a different stereoselectivity, thus yielding blennolides B and A, respectively. In the final step of the biosynthesis, the cytochrome P450 monooxygenase AacuE accepts blennolide B and/or blennolide A to conduct the dimerization reaction to furnish the tetrahydroxanthone dimers, secalonic acids D, B, and F. The protein is Baeyer-Villiger monooxygenase AacuH of Aspergillus aculeatus (strain ATCC 16872 / CBS 172.66 / WB 5094).